The chain runs to 324 residues: Olfactory receptor 51D1 (324 aa).

Over 1–38 (MQKPQLLVPIIATSNGNLVHAAYFLLVGIPGLGPTIHF) the chain is Extracellular. Residues 39 to 59 (WLAFPLCFMYALATLGNLTIV) traverse the membrane as a helical segment. At 60 to 67 (LIIRVERR) the chain is on the cytoplasmic side. Residues 68-88 (LHEPMYLFLAMLSTIDLVLSS) traverse the membrane as a helical segment. At 89-112 (ITMPKMASLFLMGIQEIEFNICLA) the chain is on the extracellular side. Cys-110 and Cys-202 are joined by a disulfide. Residues 113–133 (QMFLIHALSAVESAVLLAMAF) traverse the membrane as a helical segment. At 134 to 152 (DRFVAICHPLRHASVLTGC) the chain is on the cytoplasmic side. Residues 153 to 173 (TVAKIGLSALTRGFVFFFPLP) traverse the membrane as a helical segment. Topologically, residues 174–209 (FILKWLSYCQTHTVTHSFCLHQDIMKLSCTDTRVNV) are extracellular. A helical membrane pass occupies residues 210-230 (VYGLFIILSVMGVDSLFIGFS). Topologically, residues 231–250 (YILILWAVLELSSRRAALKA) are cytoplasmic. The chain crosses the membrane as a helical span at residues 251–271 (FNTCISHLCAVLVFYVPLIGL). At 272-285 (SVVHRLGGPTSLLH) the chain is on the extracellular side. Residues 286 to 306 (VVMANTYLLLPPVVNPLVYGA) form a helical membrane-spanning segment. The Cytoplasmic segment spans residues 307–324 (KTKEICSRVLCMFSQGGK).

It belongs to the G-protein coupled receptor 1 family.

It localises to the cell membrane. In terms of biological role, odorant receptor. The protein is Olfactory receptor 51D1 (OR51D1) of Homo sapiens (Human).